The primary structure comprises 461 residues: Phenolic glucoside malonyltransferase 1 (461 aa).

The active-site Proton acceptor is the His-167. Residues His-167–Asp-171 carry the HXXXD motif motif. A malonyl-CoA-binding site is contributed by Ser-281–Thr-282. Asp-400 (proton acceptor) is an active-site residue. The DFGWG motif signature appears at Asp-400–Gly-404.

The protein belongs to the plant acyltransferase family. Phenolic glucoside malonyltransferase subfamily. In terms of tissue distribution, expressed in all tissues. Most highly expressed in the abdomen and especially in the gut.

The enzyme catalyses a flavonol 3-O-beta-D-glucoside + malonyl-CoA = a flavonol 3-O-(6-O-malonyl-beta-D-glucoside) + CoA. It catalyses the reaction kaempferol 3-O-beta-D-glucoside + malonyl-CoA = kaempferol 3-O-(6-O-malonyl-beta-D-glucoside) + CoA. The catalysed reaction is quercetin 3-O-beta-D-glucoside + malonyl-CoA = quercetin 3-O-(6-O-malonyl-beta-D-glucoside) + CoA. It carries out the reaction a flavonol 7-O-beta-D-glucoside + malonyl-CoA = a flavonol 7-O-(6-O-malonyl-beta-D-glucoside) + CoA. The enzyme catalyses (2S)-naringenin 7-O-beta-D-glucoside + malonyl-CoA = (2S)-naringenin 7-O-(6-O-malonyl-beta-D-glucoside) + CoA. It catalyses the reaction kaempferol 7-O-beta-D-glucoside + malonyl-CoA = kaempferol 7-O-(6-O-malonyl-beta-D-glucoside) + CoA. The catalysed reaction is apigenin 7-O-beta-D-glucoside + malonyl-CoA = apigenin 7-O-(6-O-malonyl-beta-D-glucoside) + CoA. It carries out the reaction rhaponticin + malonyl-CoA = 6-O-malonyl-rhaponticin + CoA. Its function is as follows. Phenolic glucoside malonyltransferase that neutralizes phenolic glycosides in host plants. Catalyzes the transfer of a malonyl group from malonyl-CoA to the phenolic glycosides, leading to their detoxification. Phenolic glycosides, which are among the most abundant plant secondary metabolites, act as plant defense compounds: they strongly affect growth, development and behavior of insect herbivores. Has malonyltransferase activity against flavonoids kaempferol 3-O-glucoside, kaempferol 7-O-glucoside, isoquercetin (quercetin 3-O-beta-D-glucopyranoside), apigetrin (apigenin 7-O-beta-D-glucoside) and prunin (naringenin 7-O-beta-D-glucoside). Also has activity toward non-flavonoid rhaponticin, but with lower efficiency. This is Phenolic glucoside malonyltransferase 1 from Bemisia tabaci (Sweetpotato whitefly).